The chain runs to 358 residues: Uroporphyrinogen decarboxylase (358 aa).

Substrate contacts are provided by residues 27–31 (RQAGR), D77, Y154, S209, and H327.

Belongs to the uroporphyrinogen decarboxylase family. As to quaternary structure, homodimer.

It localises to the cytoplasm. It catalyses the reaction uroporphyrinogen III + 4 H(+) = coproporphyrinogen III + 4 CO2. It participates in porphyrin-containing compound metabolism; protoporphyrin-IX biosynthesis; coproporphyrinogen-III from 5-aminolevulinate: step 4/4. Its function is as follows. Catalyzes the decarboxylation of four acetate groups of uroporphyrinogen-III to yield coproporphyrinogen-III. The protein is Uroporphyrinogen decarboxylase of Azoarcus sp. (strain BH72).